We begin with the raw amino-acid sequence, 388 residues long: Cell adhesion molecule 4 (388 aa).

The first 20 residues, 1-20 (MGRARRFQWPLLLLWAAAAG), serve as a signal peptide directing secretion. Residues 21-119 (PGAGQEVQTE…DTHHQIATLT (99 aa)) form the Ig-like V-type domain. Over 21–324 (PGAGQEVQTE…VEAQTSVPYA (304 aa)) the chain is Extracellular. Asn-31 and Asn-67 each carry an N-linked (GlcNAc...) asparagine glycan. Intrachain disulfides connect Cys-44–Cys-104, Cys-145–Cys-199, and Cys-245–Cys-291. Ig-like C2-type domains are found at residues 124-219 (PENP…YVLD) and 224-307 (PTAR…YVLV). Asn-286 carries an N-linked (GlcNAc...) asparagine glycan. The helical transmembrane segment at 325 to 345 (IVGGILALLVFLIICVLVGMV) threads the bilayer. At 346-388 (WCSVRQKGSYLTHEASGLDEQGEAREAFLNGSDGHKRKEEFFI) the chain is on the cytoplasmic side. Ser-361 carries the phosphoserine modification.

This sequence belongs to the nectin family. As to quaternary structure, monomer and homodimer. N-glycosylated. As to expression, expressed in brain, prostate, brain, kidney and some other organs.

It localises to the membrane. Its function is as follows. Involved in the cell-cell adhesion. Has calcium- and magnesium-independent cell-cell adhesion activity. May have tumor-suppressor activity. This Homo sapiens (Human) protein is Cell adhesion molecule 4 (CADM4).